The primary structure comprises 334 residues: Malate dehydrogenase 2 (334 aa).

19–25 lines the NAD(+) pocket; the sequence is IGAGKVG. Arg100 and Arg106 together coordinate substrate. NAD(+) contacts are provided by residues Asn113 and 136 to 138; that span reads VSN. 2 residues coordinate substrate: Asn138 and Arg169. His193 serves as the catalytic Proton acceptor.

Belongs to the LDH/MDH superfamily.

It catalyses the reaction (S)-malate + NAD(+) = oxaloacetate + NADH + H(+). In terms of biological role, catalyzes the reversible oxidation of malate to oxaloacetate. The sequence is that of Malate dehydrogenase 2 from Aquifex aeolicus (strain VF5).